The sequence spans 361 residues: Zinc transporter ZIP13 (361 aa).

Residues 1-6 are Lumenal-facing; sequence MPGCPC. A helical membrane pass occupies residues 7-27; it reads PGCGMAGQRLLFLTVLALELL. Over 28 to 68 the chain is Cytoplasmic; sequence ERAGGSQPALRSLGAAAACRLDNKESESWGALLSGERLDTW. The chain crosses the membrane as a helical span at residues 69–89; sequence ICSLLGSLMVGLSGVFPLLVI. The Lumenal segment spans residues 90-108; sequence PLEMGTLLQSEAGAWRLRQ. A helical transmembrane segment spans residues 109 to 129; the sequence is LLSFALGGLLGNVFLHLLPEA. The Cytoplasmic segment spans residues 130–150; the sequence is WAYTCNITPGGEGQSLQRQQQ. The chain crosses the membrane as a helical span at residues 151–171; it reads LGLWVIAGFLTFLALEKMFLN. The Lumenal portion of the chain corresponds to 172-232; that stretch reads SKEDPSQAPS…TIDNFTHGLA (61 aa). The helical transmembrane segment at 233–253 threads the bilayer; the sequence is VAASFLVSKKIGLLTTMAILL. The XEXPHE-motif motif lies at 254–259; the sequence is HEIPHE. Over 254 to 275 the chain is Cytoplasmic; the sequence is HEIPHEVGDFAILLRAGFDRWT. A helical transmembrane segment spans residues 276–296; sequence AAKLQFSTALGGLLGACFAIC. Residues 297–306 are Lumenal-facing; it reads TQSPKGVEET. Residues 307-327 form a helical membrane-spanning segment; the sequence is VVWILPFTSGGFLYIALVNVL. Residues 328 to 339 are Cytoplasmic-facing; the sequence is PDLLEEDDPWHS. A helical transmembrane segment spans residues 340 to 360; it reads LQQVLLLCSGVLVMVLLSLFV. Position 361 (E361) is a topological domain, lumenal.

The protein belongs to the ZIP transporter (TC 2.A.5) family. In terms of assembly, homodimer. As to expression, highly expressed in some tissues such as bone and eye. Expressed in osteoblasts of tibia and of alveolar bone, in proliferative zone of growth plate, and in odontoblasts on the forming of the dentine of crown in molar tooth. Also expressed fibroblasts in reticular layer of dermis of skin.

It is found in the golgi apparatus membrane. It localises to the cytoplasmic vesicle membrane. The protein localises to the endoplasmic reticulum membrane. The enzyme catalyses Zn(2+)(in) = Zn(2+)(out). Functions as a zinc transporter transporting Zn(2+) from the Golgi apparatus to the cytosol and thus influences the zinc level at least in areas of the cytosol. May regulate beige adipocyte differentiation. The sequence is that of Zinc transporter ZIP13 from Mus musculus (Mouse).